A 202-amino-acid chain; its full sequence is LexA repressor (202 aa).

The segment at residues 32-52 is a DNA-binding region (H-T-H motif); that stretch reads RAEVCSAFGFKSPNAAETHLR. Active-site for autocatalytic cleavage activity residues include Ser-121 and Lys-158.

The protein belongs to the peptidase S24 family. In terms of assembly, homodimer.

It carries out the reaction Hydrolysis of Ala-|-Gly bond in repressor LexA.. Represses a number of genes involved in the response to DNA damage (SOS response), including recA and lexA. In the presence of single-stranded DNA, RecA interacts with LexA causing an autocatalytic cleavage which disrupts the DNA-binding part of LexA, leading to derepression of the SOS regulon and eventually DNA repair. The sequence is that of LexA repressor from Azoarcus sp. (strain BH72).